We begin with the raw amino-acid sequence, 140 residues long: uncharacterized protein (140 aa).

The stretch at 27–65 (LLGEVSELELQKICFNRSLRNEINQLEEQNDISFVRVER) forms a coiled coil.

This is an uncharacterized protein from Pasteurella multocida (strain Pm70).